Consider the following 161-residue polypeptide: Small ribosomal subunit protein uS19 (161 aa).

Over residues 1–19 the composition is skewed to basic residues; the sequence is MARQKKYSGKGGARKKNKQ. The tract at residues 1–26 is disordered; that stretch reads MARQKKYSGKGGARKKNKQKQSVAPR.

Belongs to the universal ribosomal protein uS19 family.

In terms of biological role, protein S19 forms a complex with S13 that binds strongly to the 16S ribosomal RNA. This Methanococcus maripaludis (strain C7 / ATCC BAA-1331) protein is Small ribosomal subunit protein uS19.